Reading from the N-terminus, the 422-residue chain is Putative FBD-associated F-box protein At1g55030 (422 aa).

In terms of domain architecture, F-box spans 8 to 60 (TDMISQLPEPLILQILGSLPTKVAITTSVLSKQWQSHWKMMPKLEFDSFLRRL). LRR repeat units follow at residues 132–153 (TLETLELILNVVMDVPPSVYLK), 154–175 (SLKTLYLLAVDFKDDESVINLL), and 180–201 (NLQDLVMRRNSSSNVKTFTIAV). Residues 342-391 (EWNQPKNVPECLHHLEKFIWEGYKWKREEIEVAKYILKNTNRLKRAIFSL) form the FBD domain.

This chain is Putative FBD-associated F-box protein At1g55030, found in Arabidopsis thaliana (Mouse-ear cress).